The primary structure comprises 276 residues: Reaction center protein L chain (276 aa).

A run of 3 helical transmembrane segments spans residues 33 to 56, 85 to 113, and 116 to 141; these read GFFG…GAAL, GLWQ…RKLG, and YHIP…VMMG. The (7R,8Z)-bacteriochlorophyll b site is built by His-154 and His-174. The helical transmembrane segment at 171–200 threads the bilayer; sequence NPAHMLGITLFFTTCLALALHGSLILSAAN. His-191 serves as a coordination point for Fe cation. Residue Phe-217 coordinates a ubiquinone. The helical transmembrane segment at 226-252 threads the bilayer; it reads GTLGIHRVGLILALSAVVWSIICMILS. His-231 contacts Fe cation.

The protein belongs to the reaction center PufL/M/PsbA/D family. As to quaternary structure, reaction center is composed of four bacteriochlorophylls, two bacteriopheophytins, two ubiquinones, one iron, and three highly hydrophobic polypeptide chains (designated L, M, and H).

It is found in the cellular chromatophore membrane. Functionally, the reaction center is a membrane-bound complex that mediates the initial photochemical event in the electron transfer process of photosynthesis. The chain is Reaction center protein L chain (pufL) from Rhodospirillum rubrum.